We begin with the raw amino-acid sequence, 203 residues long: DNA-binding transcriptional repressor ScoC (203 aa).

The HTH marR-type domain maps to 13–157; it reads ALVFTQKMAQ…MMCMIRHIYG (145 aa). Positions 63–86 form a DNA-binding region, H-T-H motif; it reads ISEIAKFGVMHVSTAFNFSKKLEE. The segment at 183-203 is disordered; the sequence is KKKAKDSAADEPAEELEPVNS. Positions 191 to 203 are enriched in acidic residues; sequence ADEPAEELEPVNS.

In terms of assembly, homodimer. Interacts with SinR.

In terms of biological role, negative regulator of protease production and sporulation. Acts by binding directly to the promoter of protease genes (aprE and nprE), and by repressing oligopeptide permease operons (appABCDF and oppABCDF), thereby preventing uptake of oligopeptides required for initiation of sporulation. Acts with SinR as a corepressor of epr expression. Binds to non-m6A-5-methylated 5'-GACGAG-3' sites, tested with scpA; when the target is methylated by DnmA, this repressor no longer binds and transcription is up-regulated. This is DNA-binding transcriptional repressor ScoC from Bacillus subtilis (strain 168).